The chain runs to 148 residues: Lysozyme C (148 aa).

The N-terminal stretch at 1-18 (MKAVIILGLVLLSVTVQG) is a signal peptide. Residues 19–148 (KIFERCELAR…VSQYVQGCGV (130 aa)) enclose the C-type lysozyme domain. Cystine bridges form between Cys24–Cys146, Cys48–Cys134, Cys83–Cys99, and Cys95–Cys113. Catalysis depends on residues Glu53 and Asp71.

This sequence belongs to the glycosyl hydrolase 22 family. Monomer.

The enzyme catalyses Hydrolysis of (1-&gt;4)-beta-linkages between N-acetylmuramic acid and N-acetyl-D-glucosamine residues in a peptidoglycan and between N-acetyl-D-glucosamine residues in chitodextrins.. In terms of biological role, lysozymes have primarily a bacteriolytic function; those in tissues and body fluids are associated with the monocyte-macrophage system and enhance the activity of immunoagents. This Erythrocebus patas (Red guenon) protein is Lysozyme C (LYZ).